The sequence spans 503 residues: D-alanine--D-alanyl carrier protein ligase (503 aa).

151–152 (TS) is a binding site for ATP. Residue D196 coordinates D-alanine. ATP is bound at residue 291 to 296 (NTYGPT). V300 contributes to the D-alanine binding site. Residues D382 and K491 each contribute to the ATP site. K491 provides a ligand contact to D-alanine.

Belongs to the ATP-dependent AMP-binding enzyme family. DltA subfamily.

The protein resides in the cytoplasm. The catalysed reaction is holo-[D-alanyl-carrier protein] + D-alanine + ATP = D-alanyl-[D-alanyl-carrier protein] + AMP + diphosphate. The protein operates within cell wall biogenesis; lipoteichoic acid biosynthesis. Its function is as follows. Catalyzes the first step in the D-alanylation of lipoteichoic acid (LTA), the activation of D-alanine and its transfer onto the D-alanyl carrier protein (Dcp) DltC. In an ATP-dependent two-step reaction, forms a high energy D-alanyl-AMP intermediate, followed by transfer of the D-alanyl residue as a thiol ester to the phosphopantheinyl prosthetic group of the Dcp. D-alanylation of LTA plays an important role in modulating the properties of the cell wall in Gram-positive bacteria, influencing the net charge of the cell wall. This chain is D-alanine--D-alanyl carrier protein ligase, found in Bacillus velezensis (strain DSM 23117 / BGSC 10A6 / LMG 26770 / FZB42) (Bacillus amyloliquefaciens subsp. plantarum).